Consider the following 259-residue polypeptide: Glucosamine-6-phosphate deaminase (259 aa).

The active-site Proton acceptor; for enolization step is the Asp-66. Residue Asp-135 is the For ring-opening step of the active site. His-137 functions as the Proton acceptor; for ring-opening step in the catalytic mechanism. Glu-142 acts as the For ring-opening step in catalysis.

The protein belongs to the glucosamine/galactosamine-6-phosphate isomerase family. NagB subfamily.

It carries out the reaction alpha-D-glucosamine 6-phosphate + H2O = beta-D-fructose 6-phosphate + NH4(+). It participates in amino-sugar metabolism; N-acetylneuraminate degradation; D-fructose 6-phosphate from N-acetylneuraminate: step 5/5. Its function is as follows. Catalyzes the reversible isomerization-deamination of glucosamine 6-phosphate (GlcN6P) to form fructose 6-phosphate (Fru6P) and ammonium ion. This Rhodococcus opacus (strain B4) protein is Glucosamine-6-phosphate deaminase.